We begin with the raw amino-acid sequence, 409 residues long: Na(+)/H(+) antiporter NhaA 2 (409 aa).

12 helical membrane-spanning segments follow: residues 10–30, 60–80, 89–109, 118–138, 148–168, 171–191, 203–223, 224–244, 257–277, 283–303, 328–348, and 356–376; these read VAAG…NTPA, GLLV…FLAG, LVPA…YLAI, GWPV…AVFG, FLLA…AVFF, GLDL…AVVG, IAVV…TLSS, GIHA…LSGL, IVLP…IGLA, FWGI…AGGL, LLGG…FAGL, and TLAV…TLSI. Residues 384-409 form a disordered region; that stretch reads AGAAADDDDATRDDFPAHADGGPARA.

Belongs to the NhaA Na(+)/H(+) (TC 2.A.33) antiporter family.

It is found in the cell membrane. It carries out the reaction Na(+)(in) + 2 H(+)(out) = Na(+)(out) + 2 H(+)(in). Na(+)/H(+) antiporter that extrudes sodium in exchange for external protons. This Clavibacter michiganensis subsp. michiganensis (strain NCPPB 382) protein is Na(+)/H(+) antiporter NhaA 2.